Consider the following 513-residue polypeptide: Serine/threonine protein phosphatase 2A 55 kDa regulatory subunit B alpha isoform (513 aa).

Position 1 is an N-acetylmethionine (Met1). WD repeat units lie at residues 36 to 75 (QEVDIISAIEFDNSGNHLATGDRGGRVVLFERTDTNNSSG), 112 to 153 (EIEE…IKKI), 232 to 270 (AHDYHINSISNNSDGETFISADDLRINLWNLEISNQSFN), 281 to 321 (DLSE…LCDS), 340 to 378 (EIIASVSDIKFAKEGRYLLSRDYMTLKLWDINMDAGPVA), and 483 to 513 (DYTTKLLHLAWHPNENSIACAAANSLYMYYA).

The protein belongs to the phosphatase 2A regulatory subunit B family. As to quaternary structure, PP2A consists of a common heteromeric enzyme, composed of a catalytic subunit (subunits C), a constant regulatory subunit (subunit A), and a variety of regulatory subunits such as subunits B (the R2/B/PR55/B55, R3/B''/PR72/PR130/PR59 and R5/B'/B56 families). Interacts with SIC/RON3. In terms of tissue distribution, expressed ubiquitously.

In terms of biological role, the B regulatory subunit may modulate substrate selectivity and catalytic activity, and may also direct the localization of the catalytic enzyme to a particular subcellular compartment. The sequence is that of Serine/threonine protein phosphatase 2A 55 kDa regulatory subunit B alpha isoform (PP2AB1) from Arabidopsis thaliana (Mouse-ear cress).